Here is a 129-residue protein sequence, read N- to C-terminus: UPF0102 protein Clim_0016 (129 aa).

Belongs to the UPF0102 family.

In Chlorobium limicola (strain DSM 245 / NBRC 103803 / 6330), this protein is UPF0102 protein Clim_0016.